A 261-amino-acid polypeptide reads, in one-letter code: Small ribosomal subunit protein eS1 (261 aa).

Residues 1-18 (MAVGKNKRISKGKKGGKK) show a composition bias toward basic residues. The segment at 1 to 20 (MAVGKNKRISKGKKGGKKKA) is disordered.

The protein belongs to the eukaryotic ribosomal protein eS1 family. In terms of assembly, component of the small ribosomal subunit. Mature ribosomes consist of a small (40S) and a large (60S) subunit. The 40S subunit contains about 33 different proteins and 1 molecule of RNA (18S). The 60S subunit contains about 49 different proteins and 3 molecules of RNA (25S, 5.8S and 5S).

The protein localises to the cytoplasm. The polypeptide is Small ribosomal subunit protein eS1 (Catharanthus roseus (Madagascar periwinkle)).